We begin with the raw amino-acid sequence, 363 residues long: 3-dehydroquinate synthase (363 aa).

NAD(+) contacts are provided by residues 134–135 (TT), K147, and K156. E189, H254, and H271 together coordinate Zn(2+).

It belongs to the sugar phosphate cyclases superfamily. Dehydroquinate synthase family. Co(2+) serves as cofactor. Zn(2+) is required as a cofactor. The cofactor is NAD(+).

Its subcellular location is the cytoplasm. It catalyses the reaction 7-phospho-2-dehydro-3-deoxy-D-arabino-heptonate = 3-dehydroquinate + phosphate. It functions in the pathway metabolic intermediate biosynthesis; chorismate biosynthesis; chorismate from D-erythrose 4-phosphate and phosphoenolpyruvate: step 2/7. Its function is as follows. Catalyzes the conversion of 3-deoxy-D-arabino-heptulosonate 7-phosphate (DAHP) to dehydroquinate (DHQ). In Prochlorococcus marinus (strain MIT 9215), this protein is 3-dehydroquinate synthase.